A 524-amino-acid polypeptide reads, in one-letter code: MSFICGLQSAARNHVFFRFNSLSNWRKCNTLASTSRGCHQVQVNHIVNKYQGLGVNQCDRWSFLPGNFHFYSTFNNKRTGGLSSTKSKEIWRITSKCTVWNDAFSRQLLIKEVTAVPSLSVLHPLSPASIRAIRNFHTSPRFQAAPVPLLLMILKPVQKLFAIIVGRGIRKWWQALPPNKKEVVKENIRKNKWKLFLGLSSFGLLFVVFYFTHLEVSPITGRSKLLLLGKEQFRLLSELEYEAWMEEFKNDMLTEKDARYLAVKEVLCHLIECNKDVPGISQINWVIHVVDSPIINAFVLPNGQMFVFTGFLNSVTDIHQLSFLLGHEIAHAVLGHAAEKAGMVHLLDFLGMIFLTMIWAICPRDSLALLCQWIQSKLQEYMFNRPYSRKLEAEADKIGLLLAAKACADIRASSVFWQQMEFVDSLHGQPKMPEWLSTHPSHGNRVEYLDRLIPQALKIREMCNCPPLSNPDPRLLFKLSTKHFLEESEKEDLNITKKQKMDTLPIQKQEQIPLTYIVEKRTGS.

Residues 1–13 (MSFICGLQSAARN) constitute a mitochondrion transit peptide. A propeptide spanning residues 14–143 (HVFFRFNSLS…RNFHTSPRFQ (130 aa)) is cleaved from the precursor. At 144–195 (AAPVPLLLMILKPVQKLFAIIVGRGIRKWWQALPPNKKEVVKENIRKNKWKL) the chain is on the mitochondrial matrix side. Residues 148 to 167 (PLLLMILKPVQKLFAIIVGR) form a cardiolipin-binding region. A stress-sensor region region spans residues 165–195 (VGRGIRKWWQALPPNKKEVVKENIRKNKWKL). The chain crosses the membrane as a helical span at residues 196-216 (FLGLSSFGLLFVVFYFTHLEV). His-327 lines the Zn(2+) pocket. Glu-328 is an active-site residue. Residues His-331 and Glu-392 each coordinate Zn(2+). A disulfide bridge links Cys-407 with Cys-465.

It belongs to the peptidase M48 family. In terms of assembly, homooligomer. Requires Zn(2+) as cofactor. May form a redox-dependent disulfide bond. Exists in a semi-oxidized state and is activated by prolonged hypoxia. Post-translationally, autocatalytically cleaved in response to mitochondrial depolarization both at the N-terminus and C-terminus to generate the short active form (S-OMA1). Autocatalytic processing at the C-terminus takes place at residues 447-456. The S-OMA1 form is unstable. OMA1 pre-processing by AFG3L2 may participate in maturation before OMA1 autocatalytic cleavage. Degraded by YMEL1 in response to membrane depolarization. Protein turnover is regulated by prohibitin (PHB and PHB2), which promotes degradation of OMA1 in a cardiolipin-binding manner. Widely expressed, with strong expression in the heart, skeletal muscle, kidney and liver.

The protein localises to the mitochondrion inner membrane. With respect to regulation, protease activity is activated upon autocatalytic cleavage in response to mitochondrial depolarization. In terms of biological role, metalloprotease that is part of the quality control system in the inner membrane of mitochondria. Activated in response to various mitochondrial stress, leading to the proteolytic cleavage of target proteins, such as OPA1, UQCC3 and DELE1. Involved in the fusion of the mitochondrial inner membranes by mediating cleavage of OPA1 at S1 position, generating the soluble OPA1 (S-OPA1), which cooperates with the membrane form (L-OPA1) to coordinate the fusion of mitochondrial inner membranes. Following stress conditions that induce loss of mitochondrial membrane potential, mediates cleavage of OPA1, leading to excess production of soluble OPA1 (S-OPA1) and negative regulation of mitochondrial fusion. Involved in mitochondrial safeguard in response to transient mitochondrial membrane depolarization (flickering) by catalyzing cleavage of OPA1, leading to excess production of S-OPA1, preventing mitochondrial hyperfusion. Also acts as a regulator of apoptosis: upon BAK and BAX aggregation, mediates cleavage of OPA1, leading to the remodeling of mitochondrial cristae and allowing the release of cytochrome c from mitochondrial cristae. In depolarized mitochondria, may also act as a backup protease for PINK1 by mediating PINK1 cleavage and promoting its subsequent degradation by the proteasome. May also cleave UQCC3 in response to mitochondrial depolarization. Also acts as an activator of the integrated stress response (ISR): in response to mitochondrial stress, mediates cleavage of DELE1 to generate the processed form of DELE1 (S-DELE1), which translocates to the cytosol and activates EIF2AK1/HRI to trigger the ISR. Its role in mitochondrial quality control is essential for regulating lipid metabolism as well as to maintain body temperature and energy expenditure under cold-stress conditions. Binds cardiolipin, possibly regulating its protein turnover. Required for the stability of the respiratory supercomplexes. In Homo sapiens (Human), this protein is Metalloendopeptidase OMA1, mitochondrial.